The primary structure comprises 398 residues: Cytohesin-1 (398 aa).

The residue at position 1 (M1) is an N-acetylmethionine. The necessary for localization at adherens junction stretch occupies residues 1-60 (MEDDDSYVPSDLTAEERQELENIRRRKQELLADIQRLKEEIAEVANEIESLGSTEERKNM). Residues 10-67 (SDLTAEERQELENIRRRKQELLADIQRLKEEIAEVANEIESLGSTEERKNMQRNKQVA) are a coiled coil. In terms of domain architecture, SEC7 spans 73–202 (FNMDPKKGIQ…IIMLNTSLHN (130 aa)). The region spanning 260-377 (NPDREGWLLK…WIKCIKAAIS (118 aa)) is the PH domain. A 1,2-diacyl-sn-glycero-3-phospho-(1D-myo-inositol-3,4,5-trisphosphate) is bound by residues 269 to 277 (KLGGGRVKT), R281, Y292, R302, and N351. The C-terminal autoinhibitory region stretch occupies residues 388–396 (RKKKVSSTK).

Interacts with TRIM23 and CYTIP. Interacts (via coiled-coil domain) with FRMD4A (via coiled-coil domain). Interacts with FRMD4B. Found in a complex with PARD3, CYTH1 and FRMD4A. Interacts (via N-terminal domain) with INAVA (via N-terminal domain). In terms of processing, ubiquitinated by SCF(FBXW11) E3 ubiquitin-protein ligase complex. Ubiquitination induces proteasomal degradation. In terms of tissue distribution, expressed in colon and small intestine (at protein level).

Its subcellular location is the cell membrane. It localises to the cytoplasm. The protein localises to the cytosol. It is found in the cell junction. The protein resides in the tight junction. Its subcellular location is the adherens junction. Its function is as follows. Promotes guanine-nucleotide exchange on ARF1, ARF5 and ARF6. Promotes the activation of ARF factors through replacement of GDP with GTP. Plays an important role in membrane trafficking, during junctional remodeling and epithelial polarization, through regulation of ARF6 activity. In Mus musculus (Mouse), this protein is Cytohesin-1 (Cyth1).